Consider the following 376-residue polypeptide: MESNKDEAERCISIALKAIQSNQPERALRFLEKAQRLYPTPRVSALIESLNQKPQSTGDHPQPTDTTHTTTKKAGGTETPSANGEAGGGESAKGYTSEQVAAVKRVKQCKDYYEILGVSRSASDEDLKKAYRKLALKFHPDKNHAPGATEAFKAIGTAYAVLSNPEKRKQYDQFGDDKSQAARHGHSHGDFHRGFEADISPEDLFNMFFGGGFPSSNVHVYSNGRMRYTYQQRQDRRDNQGDGGLGVFVQLMPILILILVSALSQLMVSSPPYSLSPRPSVGHIHKRVTDHLNVAYYVADTFSEEYTGSSLKTVERNVEDDYIANLRNNCWKEKQQKEGLLYRARYFGDTDMYHRAQKMGTPSCNRLSEVQASLHG.

M1 bears the N-acetylmethionine mark. Positions 45 to 97 (ALIESLNQKPQSTGDHPQPTDTTHTTTKKAGGTETPSANGEAGGGESAKGYTS) are disordered. Positions 57–84 (TGDHPQPTDTTHTTTKKAGGTETPSANG) are enriched in low complexity. Positions 111-175 (DYYEILGVSR…EKRKQYDQFG (65 aa)) constitute a J domain. Residue H186 is modified to Pros-methylhistidine. A helical transmembrane segment spans residues 243 to 263 (GGLGVFVQLMPILILILVSAL).

This sequence belongs to the DnaJ family. DNAJB12/DNAJB14 subfamily. Homodimer and homotetramer. Interacts (via J domain) with HSPA8/Hsc70. Forms a multiprotein complex, at least composed of DNAJB12, DNAJB14, HSPA8/Hsc70 and SGTA; interaction with DNAJB14 and HSPA8/Hsc70 is direct. Methylated at His-186 by METTL9.

It localises to the endoplasmic reticulum membrane. It is found in the nucleus membrane. Acts as a co-chaperone with HSPA8/Hsc70; required to promote protein folding and trafficking, prevent aggregation of client proteins, and promote unfolded proteins to endoplasmic reticulum-associated degradation (ERAD) pathway. Acts by determining HSPA8/Hsc70's ATPase and polypeptide-binding activities. Can also act independently of HSPA8/Hsc70: together with DNAJB14, acts as a chaperone that promotes maturation of potassium channels KCND2 and KCNH2 by stabilizing nascent channel subunits and assembling them into tetramers. While stabilization of nascent channel proteins is dependent on HSPA8/Hsc70, the process of oligomerization of channel subunits is independent of HSPA8/Hsc70. When overexpressed, forms membranous structures together with DNAJB14 and HSPA8/Hsc70 within the nucleus; the role of these structures, named DJANGOs, is still unclear. In Mus musculus (Mouse), this protein is DnaJ homolog subfamily B member 12.